We begin with the raw amino-acid sequence, 1405 residues long: DNA-directed RNA polymerase subunit beta' (1405 aa).

Positions 70, 72, 85, and 88 each coordinate Zn(2+). Mg(2+) is bound by residues D460, D462, and D464. The Zn(2+) site is built by C814, C888, C895, and C898.

Belongs to the RNA polymerase beta' chain family. In terms of assembly, the RNAP catalytic core consists of 2 alpha, 1 beta, 1 beta' and 1 omega subunit. When a sigma factor is associated with the core the holoenzyme is formed, which can initiate transcription. Mg(2+) serves as cofactor. Zn(2+) is required as a cofactor.

The catalysed reaction is RNA(n) + a ribonucleoside 5'-triphosphate = RNA(n+1) + diphosphate. In terms of biological role, DNA-dependent RNA polymerase catalyzes the transcription of DNA into RNA using the four ribonucleoside triphosphates as substrates. The protein is DNA-directed RNA polymerase subunit beta' of Shewanella woodyi (strain ATCC 51908 / MS32).